A 121-amino-acid chain; its full sequence is Small ribosomal subunit protein uS13 (121 aa).

The disordered stretch occupies residues 94-121 (GLPVRGQNTKNNARTRKGPRRTVANKKK). Positions 106–121 (ARTRKGPRRTVANKKK) are enriched in basic residues.

It belongs to the universal ribosomal protein uS13 family. As to quaternary structure, part of the 30S ribosomal subunit. Forms a loose heterodimer with protein S19. Forms two bridges to the 50S subunit in the 70S ribosome.

Its function is as follows. Located at the top of the head of the 30S subunit, it contacts several helices of the 16S rRNA. In the 70S ribosome it contacts the 23S rRNA (bridge B1a) and protein L5 of the 50S subunit (bridge B1b), connecting the 2 subunits; these bridges are implicated in subunit movement. Contacts the tRNAs in the A and P-sites. In Anoxybacillus flavithermus (strain DSM 21510 / WK1), this protein is Small ribosomal subunit protein uS13.